Reading from the N-terminus, the 324-residue chain is Putative ribose-phosphate pyrophosphokinase 1 (324 aa).

Residues 43–45 (DGE) and 102–103 (RQ) each bind ATP. Histidine 136 serves as a coordination point for Mg(2+). D-ribose 5-phosphate is bound by residues aspartate 225 and 229 to 233 (NTGQT).

Belongs to the ribose-phosphate pyrophosphokinase family. Class I subfamily. As to quaternary structure, homohexamer. Requires Mg(2+) as cofactor.

The protein localises to the cytoplasm. It catalyses the reaction D-ribose 5-phosphate + ATP = 5-phospho-alpha-D-ribose 1-diphosphate + AMP + H(+). Its pathway is metabolic intermediate biosynthesis; 5-phospho-alpha-D-ribose 1-diphosphate biosynthesis; 5-phospho-alpha-D-ribose 1-diphosphate from D-ribose 5-phosphate (route I): step 1/1. Functionally, involved in the biosynthesis of the central metabolite phospho-alpha-D-ribosyl-1-pyrophosphate (PRPP) via the transfer of pyrophosphoryl group from ATP to 1-hydroxyl of ribose-5-phosphate (Rib-5-P). The chain is Putative ribose-phosphate pyrophosphokinase 1 from Enterococcus faecalis (strain ATCC 700802 / V583).